A 130-amino-acid polypeptide reads, in one-letter code: S-adenosylmethionine decarboxylase proenzyme (130 aa).

Ser63 (schiff-base intermediate with substrate; via pyruvic acid) is an active-site residue. Position 63 is a pyruvic acid (Ser); by autocatalysis (Ser63). Residue His68 is the Proton acceptor; for processing activity of the active site. Cys83 (proton donor; for catalytic activity) is an active-site residue.

It belongs to the prokaryotic AdoMetDC family. Type 1 subfamily. In terms of assembly, heterotetramer of two alpha and two beta chains arranged as a dimer of alpha/beta heterodimers. It depends on pyruvate as a cofactor. Post-translationally, is synthesized initially as an inactive proenzyme. Formation of the active enzyme involves a self-maturation process in which the active site pyruvoyl group is generated from an internal serine residue via an autocatalytic post-translational modification. Two non-identical subunits are generated from the proenzyme in this reaction, and the pyruvate is formed at the N-terminus of the alpha chain, which is derived from the carboxyl end of the proenzyme. The post-translation cleavage follows an unusual pathway, termed non-hydrolytic serinolysis, in which the side chain hydroxyl group of the serine supplies its oxygen atom to form the C-terminus of the beta chain, while the remainder of the serine residue undergoes an oxidative deamination to produce ammonia and the pyruvoyl group blocking the N-terminus of the alpha chain.

It carries out the reaction S-adenosyl-L-methionine + H(+) = S-adenosyl 3-(methylsulfanyl)propylamine + CO2. It functions in the pathway amine and polyamine biosynthesis; S-adenosylmethioninamine biosynthesis; S-adenosylmethioninamine from S-adenosyl-L-methionine: step 1/1. Its function is as follows. Catalyzes the decarboxylation of S-adenosylmethionine to S-adenosylmethioninamine (dcAdoMet), the propylamine donor required for the synthesis of the polyamines spermine and spermidine from the diamine putrescine. This chain is S-adenosylmethionine decarboxylase proenzyme, found in Thermosipho melanesiensis (strain DSM 12029 / CIP 104789 / BI429).